Here is a 424-residue protein sequence, read N- to C-terminus: Phosphomethylpyrimidine synthase (424 aa).

Substrate contacts are provided by residues Met94, Tyr123, His162, 184 to 186 (SRG), 225 to 228 (NGMR), and Glu264. His268 provides a ligand contact to Zn(2+). Tyr291 contacts substrate. His332 contacts Zn(2+). The [4Fe-4S] cluster site is built by Cys406, Cys409, and Cys413.

It belongs to the ThiC family. The cofactor is [4Fe-4S] cluster.

It carries out the reaction 5-amino-1-(5-phospho-beta-D-ribosyl)imidazole + S-adenosyl-L-methionine = 4-amino-2-methyl-5-(phosphooxymethyl)pyrimidine + CO + 5'-deoxyadenosine + formate + L-methionine + 3 H(+). Its pathway is cofactor biosynthesis; thiamine diphosphate biosynthesis. Functionally, catalyzes the synthesis of the hydroxymethylpyrimidine phosphate (HMP-P) moiety of thiamine from aminoimidazole ribotide (AIR) in a radical S-adenosyl-L-methionine (SAM)-dependent reaction. This chain is Phosphomethylpyrimidine synthase, found in Methanoculleus marisnigri (strain ATCC 35101 / DSM 1498 / JR1).